The primary structure comprises 529 residues: Corneodesmosin (529 aa).

Positions 1–32 (MGSSRAPWMGRVGGHGMMALLLAGLLLPGTLA) are cleaved as a signal peptide. Disordered regions lie at residues 38-248 (FSDP…SVSG) and 383-492 (GSTG…SSAG). 6 stretches are compositionally biased toward low complexity: residues 58 to 83 (GKGD…SARS), 90 to 100 (GSSSGSSIAQG), 111 to 175 (GYSQ…NGSA), 189 to 231 (PSQP…SGGP), 392 to 408 (SPSS…SSSS), and 426 to 441 (PGTG…QSSG). The N-linked (GlcNAc...) asparagine glycan is linked to N172. Over residues 449–467 (GSKSSSSGHPCMSVSSLTL) the composition is skewed to polar residues.

The protein localises to the secreted. Important for the epidermal barrier integrity. In Pan troglodytes (Chimpanzee), this protein is Corneodesmosin (CDSN).